Here is an 86-residue protein sequence, read N- to C-terminus: RNA-binding protein Hfq (86 aa).

One can recognise a Sm domain in the interval 12 to 73; it reads DIFLNQVRKE…ISTISPQKPV (62 aa).

It belongs to the Hfq family. In terms of assembly, homohexamer.

RNA chaperone that binds small regulatory RNA (sRNAs) and mRNAs to facilitate mRNA translational regulation in response to envelope stress, environmental stress and changes in metabolite concentrations. Also binds with high specificity to tRNAs. The chain is RNA-binding protein Hfq from Caldanaerobacter subterraneus subsp. tengcongensis (strain DSM 15242 / JCM 11007 / NBRC 100824 / MB4) (Thermoanaerobacter tengcongensis).